Reading from the N-terminus, the 152-residue chain is Large ribosomal subunit protein uL15 (152 aa).

The disordered stretch occupies residues 1-56 (MELNTLKPAKNSVKQNTRYGRGQGSGKGGTSTRGHKGAKSRSGYKSKPGFEGGQLP). Over residues 21–31 (RGQGSGKGGTS) the composition is skewed to gly residues. A compositionally biased stretch (basic residues) spans 33-44 (RGHKGAKSRSGY).

It belongs to the universal ribosomal protein uL15 family. In terms of assembly, part of the 50S ribosomal subunit.

In terms of biological role, binds to the 23S rRNA. The sequence is that of Large ribosomal subunit protein uL15 from Amoebophilus asiaticus (strain 5a2).